Reading from the N-terminus, the 301-residue chain is MTTKHDVKTFQGFIMTLQEYWAQQGCAIVQPLDMEVGAGTFHPMTFLRALGPEPMSCAYVQPSRRPTDGRYGDNPNRLQHFYQYQVVLKPSPDNIQELYLGSLEAAGIDMNIHDVRFVEDNWESPTLGAWGLGWEVWLNGMEVSQFTYFQQVGGLECKPVTGEITYGLERLAMYIQEVDNVYDLVWTDGPMGKVMYGDIFHQNEVEQSAYNFEHANVEVLFRAFDDCEVACQHLLSLEKPLALPAYEQVMKASHAFNLLDARHAISVTERQRYILRVRTMAKGVAEAYYQSREALGFPIGK.

The protein belongs to the class-II aminoacyl-tRNA synthetase family. Tetramer of two alpha and two beta subunits.

It localises to the cytoplasm. The catalysed reaction is tRNA(Gly) + glycine + ATP = glycyl-tRNA(Gly) + AMP + diphosphate. The sequence is that of Glycine--tRNA ligase alpha subunit from Shewanella piezotolerans (strain WP3 / JCM 13877).